The primary structure comprises 204 residues: Large ribosomal subunit protein uL3 (204 aa).

It belongs to the universal ribosomal protein uL3 family. Part of the 50S ribosomal subunit. Forms a cluster with proteins L14 and L19.

Its function is as follows. One of the primary rRNA binding proteins, it binds directly near the 3'-end of the 23S rRNA, where it nucleates assembly of the 50S subunit. This chain is Large ribosomal subunit protein uL3, found in Azobacteroides pseudotrichonymphae genomovar. CFP2.